A 628-amino-acid polypeptide reads, in one-letter code: tRNA uridine 5-carboxymethylaminomethyl modification enzyme MnmG (628 aa).

13–18 (GAGHAG) serves as a coordination point for FAD. Position 273–287 (273–287 (GPRYCPSIEDKIVRF)) interacts with NAD(+).

Belongs to the MnmG family. In terms of assembly, homodimer. Heterotetramer of two MnmE and two MnmG subunits. FAD serves as cofactor.

It is found in the cytoplasm. Its function is as follows. NAD-binding protein involved in the addition of a carboxymethylaminomethyl (cmnm) group at the wobble position (U34) of certain tRNAs, forming tRNA-cmnm(5)s(2)U34. The polypeptide is tRNA uridine 5-carboxymethylaminomethyl modification enzyme MnmG (Buchnera aphidicola subsp. Acyrthosiphon pisum (strain Tuc7)).